We begin with the raw amino-acid sequence, 734 residues long: Fc receptor-like protein 3 (734 aa).

Residues 1 to 17 (MLLWLLLLILTPGREQS) form the signal peptide. Topologically, residues 18–573 (GVAPKAVLLL…GTSRNRTGLT (556 aa)) are extracellular. Ig-like C2-type domains follow at residues 21-98 (PKAV…VEFS), 99-182 (PDWL…KPLN), 192-270 (PVLR…HSIK), 284-369 (PVSN…PILS), 383-470 (PVLT…LRVT), and 476-563 (PVLT…LNVT). Cystine bridges form between Cys44-Cys82, Cys120-Cys163, Cys211-Cys260, Cys309-Cys358, Cys404-Cys451, and Cys497-Cys544. N-linked (GlcNAc...) asparagine glycosylation occurs at Asn561. A helical transmembrane segment spans residues 574–594 (AAGITGLVLSILVLAAAAALL). Residues 595-734 (HYARARRKPG…VPRVLLASDH (140 aa)) are Cytoplasmic-facing. Residues 603–655 (PGGLSATGTSSHSPSECQEPSSSRPSRIDPQEPTHSKPLAPMELEPMYSNVNP) are disordered. The span at 608 to 627 (ATGTSSHSPSECQEPSSSRP) shows a compositional bias: polar residues. Residues 628 to 637 (SRIDPQEPTH) show a composition bias toward basic and acidic residues. 4 consecutive short sequence motifs (ITIM motif) follow at residues 648 to 653 (PMYSNV), 660 to 665 (PIYSQI), 690 to 695 (VLYSEL), and 720 to 725 (ENYENV). Phosphotyrosine occurs at positions 650, 662, 692, and 722. Residues 695–734 (LKKTHPDDSAGEASSRGRAHEEDDEENYENVPRVLLASDH) form a disordered region.

In terms of assembly, interacts (via phosphorylated ITIM motifs) with phosphatases INPP5D, PTPN6 and PTPN11. Interacts (via ITIM motifs) SYK and ZAP70. Interacts with IZUMO1R/JUNO. Interacts (via extracellular domain) with IZUMO1; the interaction replaces IZUMO1R/JUNO as IZUMO1 receptor after adhesion between sperm and egg. In terms of processing, phosphorylated on cytoplasmic tyrosines; required for interaction with protein tyrosine phosphatases and protein tyrosine kinases. Primarily expressed in secondary lymphoid tissues by mature subsets of B-cells. Low expression on transitional B cells which increases to higher surface expression on mature and memory B-cells with innate-like features (at protein level). Expressed a low levels in naive and germinal center B-cells but also expressed in NK cells (at protein level). Expressed in unfertilized oocytes (at protein level). Expressed in a population of thymically derived naturally occurring regulatory T-cells that exhibits a memory phenotype, specialized in suppressing immune response to self-antigens. Detected in spleen, lymph node, peripheral blood lymphocytes, thymus, bone marrow, kidney, salivary gland, adrenal gland and uterus.

It localises to the cell membrane. It is found in the cell projection. The protein localises to the microvillus membrane. Functionally, promotes TLR9-induced B-cell proliferation, activation and survival but inhibits antibody production and suppresses plasma cell differentiation. Enhances activation of NF-kappa-B and MAPK signaling pathways in TLR9 stimulated B-cells. Has inhibitory potentional on B-cell receptor (BCR)-mediated signaling, possibly through association with SH2 domain-containing phosphatases. Inhibits cell tyrosine phosphorylation, calcium mobilization and activation-induced cell death induced through BCR signaling. Regulatory T-cells expressing FCRL3 exhibit a memory phenotype, are relatively nonresponsive to antigenic stimulation in presence of IL2 and have reduced capacity to suppress the proliferation of effector T-cells. Acts as a human-specific epitope on the cell surface of oocytes (oolemma) and plays a role during sperm-egg adhesion and fusion. Interacts with the IZUMO1-IZUMO1R/JUNO sperm-egg complex and replaces IZUMO1R/JUNO as IZUMO1 receptor during fertilization, thereby permitting species-specific gamete fusion. This is Fc receptor-like protein 3 from Homo sapiens (Human).